Here is a 430-residue protein sequence, read N- to C-terminus: Glutamine synthetase, chloroplastic/mitochondrial (430 aa).

Residues 1–45 (MAQILAASPTCQMRVPKHSSVIASSSKLWSSVVLKQKKQSNNKVR) constitute a chloroplast and mitochondrion transit peptide. The region spanning 77 to 157 (IIAEYIWIGG…VICDTWTPAG (81 aa)) is the GS beta-grasp domain. A disordered region spans residues 97-122 (TIEKPVEDPSELPKWNYDGSSTGQAP). Phosphoserine is present on serine 106. The GS catalytic domain maps to 161-430 (PTNKRAKAAE…LAAQKLSLNV (270 aa)).

The protein belongs to the glutamine synthetase family. Homooctamer. In terms of tissue distribution, expressed in mesophyll and epidermal cells of leaves.

The protein resides in the plastid. Its subcellular location is the chloroplast. It localises to the mitochondrion. The catalysed reaction is L-glutamate + NH4(+) + ATP = L-glutamine + ADP + phosphate + H(+). The light-modulated chloroplast/mitochondrial enzyme, encoded by a nuclear gene and expressed primarily in leaves, is responsible for the reassimilation of the ammonia generated by photorespiration. The protein is Glutamine synthetase, chloroplastic/mitochondrial (GLN2) of Arabidopsis thaliana (Mouse-ear cress).